The following is a 421-amino-acid chain: Cell division protein FtsZ (421 aa).

GTP contacts are provided by residues 26-30 (GGGGN), 132-134 (GTG), Glu-163, Arg-167, and Asn-211.

It belongs to the FtsZ family. In terms of assembly, homodimer. Polymerizes to form a dynamic ring structure in a strictly GTP-dependent manner. Interacts directly with several other division proteins.

It is found in the cytoplasm. Essential cell division protein that forms a contractile ring structure (Z ring) at the future cell division site. The regulation of the ring assembly controls the timing and the location of cell division. One of the functions of the FtsZ ring is to recruit other cell division proteins to the septum to produce a new cell wall between the dividing cells. Binds GTP and shows GTPase activity. This Haemophilus influenzae (strain ATCC 51907 / DSM 11121 / KW20 / Rd) protein is Cell division protein FtsZ.